A 453-amino-acid chain; its full sequence is Zinc finger and BTB domain-containing protein 44 (453 aa).

Residue lysine 4 forms a Glycyl lysine isopeptide (Lys-Gly) (interchain with G-Cter in SUMO2) linkage. The 68-residue stretch at 31–98 folds into the BTB domain; the sequence is CDITIRVQDK…AYTATLSINT (68 aa). Residue serine 135 is modified to Phosphoserine. A disordered region spans residues 135–157; it reads SQPEKSLDAGQENSSNCNFTSRD. Residues 145-157 are compositionally biased toward polar residues; that stretch reads QENSSNCNFTSRD. Residues serine 159, serine 161, serine 165, serine 191, serine 194, and serine 199 each carry the phosphoserine modification. Residue threonine 200 is modified to Phosphothreonine. The tract at residues 241–266 is disordered; that stretch reads QPEKAKQAENTRTLELPGPSEAGRRV. Residue lysine 290 forms a Glycyl lysine isopeptide (Lys-Gly) (interchain with G-Cter in SUMO2) linkage. Disordered stretches follow at residues 295–324 and 336–366; these read SDEEVHEEVSQPVSASQSSLSDQQTVPGSE and SSSIGSVDEGVTEGLPTLQSTSSTNAHADDD. Low complexity predominate over residues 304 to 318; sequence SQPVSASQSSLSDQQ. Over residues 352–361 the composition is skewed to polar residues; it reads TLQSTSSTNA. C2H2-type zinc fingers lie at residues 399–421 and 427–449; these read FQCPTCGVRFTRIQNLKQHMLIH and FQCDCCGKKFTRAYSLKMHRLKH.

It is found in the nucleus. This is Zinc finger and BTB domain-containing protein 44 (Zbtb44) from Mus musculus (Mouse).